A 367-amino-acid chain; its full sequence is MKNAYLLLTPGPLSTSESVREAMLKDWCTWDDDYNLEIVEVIRRKLVTLATTQSGYTSVLMQGSGTASVEATIGSVMLPTDKLLVIDNGAYGARIAQIAQYLNIACRVIAPGETAQPNLDEIADVLTHDPAITHVAIVHCETTTGMLNPIAEVAKIAKQHGKRVILDAMSSFGGIPMDIGALGIDFMISSANKCIQGVPGFGFVIAKRSELEQCQGRARSLTLDLFDQWQCMEKNHGKWRFTSPTHTVRAFYQALLELESEGGIAARYQRYQTNQTQLVKGMRELGFAPLLPEKLHSPIITSFYSPEHSDYQFAEFYQRLKQQGFVIYPGKVSHADCFRIGNIGEVYPQDIERLLSAMQHAIYWQQA.

Lysine 193 carries the post-translational modification N6-(pyridoxal phosphate)lysine.

It belongs to the class-V pyridoxal-phosphate-dependent aminotransferase family. PhnW subfamily. Homodimer. Requires pyridoxal 5'-phosphate as cofactor.

It carries out the reaction (2-aminoethyl)phosphonate + pyruvate = phosphonoacetaldehyde + L-alanine. Involved in phosphonate degradation. This is 2-aminoethylphosphonate--pyruvate transaminase from Vibrio cholerae serotype O1 (strain ATCC 39541 / Classical Ogawa 395 / O395).